The following is a 638-amino-acid chain: Carbon monoxide dehydrogenase (638 aa).

[4Fe-4S] cluster-binding residues include cysteine 46, cysteine 55, cysteine 58, cysteine 63, and cysteine 74. The [Ni-4Fe-5S] cluster site is built by histidine 265, cysteine 299, cysteine 343, cysteine 452, cysteine 483, and cysteine 524.

The protein belongs to the Ni-containing carbon monoxide dehydrogenase family. In terms of assembly, homodimer. [4Fe-4S] cluster is required as a cofactor. It depends on [Ni-4Fe-5S] cluster as a cofactor.

It catalyses the reaction CO + 2 oxidized [2Fe-2S]-[ferredoxin] + H2O = 2 reduced [2Fe-2S]-[ferredoxin] + CO2 + 2 H(+). In terms of biological role, CODH oxidizes carbon monoxide coupled, via CooF, to the reduction of a hydrogen cation by a hydrogenase (possibly CooH). The polypeptide is Carbon monoxide dehydrogenase (cooS) (Methanopyrus kandleri (strain AV19 / DSM 6324 / JCM 9639 / NBRC 100938)).